A 131-amino-acid polypeptide reads, in one-letter code: Insertion element iso-IS1n protein InsB (131 aa).

The protein belongs to the transposase 27 family.

In terms of biological role, absolutely required for transposition of IS1. In Shigella dysenteriae, this protein is Insertion element iso-IS1n protein InsB (insB).